A 413-amino-acid chain; its full sequence is Serine hydroxymethyltransferase (413 aa).

Residues Leu119 and 123–125 contribute to the (6S)-5,6,7,8-tetrahydrofolate site; that span reads GHL. Lys228 carries the post-translational modification N6-(pyridoxal phosphate)lysine. Position 351-353 (351-353) interacts with (6S)-5,6,7,8-tetrahydrofolate; sequence SPF.

This sequence belongs to the SHMT family. Homodimer. The cofactor is pyridoxal 5'-phosphate.

The protein localises to the cytoplasm. It catalyses the reaction (6R)-5,10-methylene-5,6,7,8-tetrahydrofolate + glycine + H2O = (6S)-5,6,7,8-tetrahydrofolate + L-serine. It participates in one-carbon metabolism; tetrahydrofolate interconversion. The protein operates within amino-acid biosynthesis; glycine biosynthesis; glycine from L-serine: step 1/1. Catalyzes the reversible interconversion of serine and glycine with tetrahydrofolate (THF) serving as the one-carbon carrier. This reaction serves as the major source of one-carbon groups required for the biosynthesis of purines, thymidylate, methionine, and other important biomolecules. Also exhibits THF-independent aldolase activity toward beta-hydroxyamino acids, producing glycine and aldehydes, via a retro-aldol mechanism. This Clostridium botulinum (strain ATCC 19397 / Type A) protein is Serine hydroxymethyltransferase.